The primary structure comprises 339 residues: NmrA-like family domain-containing oxidoreductase notA (339 aa).

Residues 13 to 18 (GATGAQ), 39 to 43 (RKPDS), 60 to 61 (DG), 81 to 83 (TNS), K140, and 164 to 167 (YMGI) contribute to the NADP(+) site.

Belongs to the NmrA-type oxidoreductase family.

In terms of biological role, nmrA-like family domain-containing oxidoreductase; part of the gene cluster that mediates the biosynthesis of notoamide, a fungal indole alkaloid that belongs to a family of natural products containing a characteristic bicyclo[2.2.2]diazaoctane core. The first step of notoamide biosynthesis involves coupling of L-proline and L-tryptophan by the bimodular NRPS notE, to produce cyclo-L-tryptophan-L-proline called brevianamide F. The reverse prenyltransferase notF then acts as a deoxybrevianamide E synthase and converts brevianamide F to deoxybrevianamide E via reverse prenylation at C-2 of the indole ring leading to the bicyclo[2.2.2]diazaoctane core. Deoxybrevianamide E is further hydroxylated at C-6 of the indole ring, likely catalyzed by the cytochrome P450 monooxygenase notG, to yield 6-hydroxy-deoxybrevianamide E. 6-hydroxy-deoxybrevianamide E is a specific substrate of the prenyltransferase notC for normal prenylation at C-7 to produce 6-hydroxy-7-prenyl-deoxybrevianamide, also called notoamide S. As the proposed pivotal branching point in notoamide biosynthesis, notoamide S can be diverted to notoamide E through an oxidative pyran ring closure putatively catalyzed by either notH cytochrome P450 monooxygenase or the notD FAD-linked oxidoreductase. This step would be followed by an indole 2,3-epoxidation-initiated pinacol-like rearrangement catalyzed by the notB FAD-dependent monooxygenase leading to the formation of notoamide C and notoamide D. On the other hand notoamide S is converted to notoamide T by notH (or notD), a bifunctional oxidase that also functions as the intramolecular Diels-Alderase responsible for generation of (+)-notoamide T. To generate antipodal (-)-notoaminide T, notH' (or notD') in Aspergillus versicolor is expected to catalyze a Diels-Alder reaction leading to the opposite stereochemistry. The remaining oxidoreductase notD (or notH) likely catalyzes the oxidative pyran ring formation to yield (+)-stephacidin A. The FAD-dependent monooxygenase notI is highly similar to notB and is predicted to catalyze a similar conversion from (+)-stephacidin A to (-)-notoamide B via the 2,3-epoxidation of (+)-stephacidin A followed by a pinacol-type rearrangement. Finally, it remains unclear which enzyme could be responsible for the final hydroxylation steps leading to notoamide A and sclerotiamide. The sequence is that of NmrA-like family domain-containing oxidoreductase notA from Aspergillus sp. (strain MF297-2).